A 223-amino-acid chain; its full sequence is Octanoyltransferase (223 aa).

The BPL/LPL catalytic domain maps to 30 to 214 (DLDRDCFLLT…IVADLFGEFT (185 aa)). Residues 75-82 (RGGEITYH), 144-146 (SIG), and 157-159 (GFA) contribute to the substrate site. Cys-175 serves as the catalytic Acyl-thioester intermediate.

This sequence belongs to the LipB family.

The protein localises to the cytoplasm. It carries out the reaction octanoyl-[ACP] + L-lysyl-[protein] = N(6)-octanoyl-L-lysyl-[protein] + holo-[ACP] + H(+). The protein operates within protein modification; protein lipoylation via endogenous pathway; protein N(6)-(lipoyl)lysine from octanoyl-[acyl-carrier-protein]: step 1/2. Catalyzes the transfer of endogenously produced octanoic acid from octanoyl-acyl-carrier-protein onto the lipoyl domains of lipoate-dependent enzymes. Lipoyl-ACP can also act as a substrate although octanoyl-ACP is likely to be the physiological substrate. The polypeptide is Octanoyltransferase (Desulfotalea psychrophila (strain LSv54 / DSM 12343)).